Reading from the N-terminus, the 247-residue chain is Probable chemoreceptor glutamine deamidase CheD (247 aa).

The segment at 204-247 (KRPAAPQPARPRIELFGGRGTAPGAGSPSAGSPYAANLSRKQEA) is disordered. Low complexity predominate over residues 227–239 (GAGSPSAGSPYAA).

The protein belongs to the CheD family.

It carries out the reaction L-glutaminyl-[protein] + H2O = L-glutamyl-[protein] + NH4(+). In terms of biological role, probably deamidates glutamine residues to glutamate on methyl-accepting chemotaxis receptors (MCPs), playing an important role in chemotaxis. The sequence is that of Probable chemoreceptor glutamine deamidase CheD from Burkholderia orbicola (strain AU 1054).